Reading from the N-terminus, the 175-residue chain is Peptide methionine sulfoxide reductase MsrA (175 aa).

The active site involves Cys-10.

It belongs to the MsrA Met sulfoxide reductase family.

It catalyses the reaction L-methionyl-[protein] + [thioredoxin]-disulfide + H2O = L-methionyl-(S)-S-oxide-[protein] + [thioredoxin]-dithiol. The enzyme catalyses [thioredoxin]-disulfide + L-methionine + H2O = L-methionine (S)-S-oxide + [thioredoxin]-dithiol. In terms of biological role, has an important function as a repair enzyme for proteins that have been inactivated by oxidation. Catalyzes the reversible oxidation-reduction of methionine sulfoxide in proteins to methionine. This Psychrobacter sp. (strain PRwf-1) protein is Peptide methionine sulfoxide reductase MsrA.